We begin with the raw amino-acid sequence, 194 residues long: RNA polymerase II subunit A C-terminal domain phosphatase SSU72 like protein 3 (194 aa).

Belongs to the SSU72 phosphatase family.

The protein resides in the nucleus. It carries out the reaction O-phospho-L-seryl-[protein] + H2O = L-seryl-[protein] + phosphate. The enzyme catalyses O-phospho-L-threonyl-[protein] + H2O = L-threonyl-[protein] + phosphate. In terms of biological role, protein phosphatase that catalyzes the dephosphorylation of the C-terminal domain of RNA polymerase II. Plays a role in RNA processing and termination. This Homo sapiens (Human) protein is RNA polymerase II subunit A C-terminal domain phosphatase SSU72 like protein 3.